Reading from the N-terminus, the 309-residue chain is Taste receptor type 2 member 31 (309 aa).

Over 1–2 (MI) the chain is Extracellular. A helical membrane pass occupies residues 3–23 (TFLPTIFSILVVVIFVIGNFG). Topologically, residues 24 to 55 (NGFIALVNSIEWVKRQKISFADQILTALAVSR) are cytoplasmic. A helical membrane pass occupies residues 56–76 (VGLLWALLLNWYSTVFNPAFY). The Extracellular segment spans residues 77–100 (SVGVRTTVYDVWTVTGHFSNWLAT). The helical transmembrane segment at 101-121 (SLSIFYLLKIANFSNLIFLHL) threads the bilayer. At 122 to 126 (KRRVK) the chain is on the cytoplasmic side. A helical membrane pass occupies residues 127-147 (SVILVMLLGPLLFLACQLFVI). Over 148-181 (NMKEILRTKEYEGNMTWKIKLRSAMYLSDATITT) the chain is Extracellular. Asn161 is a glycosylation site (N-linked (GlcNAc...) asparagine). A helical membrane pass occupies residues 182–202 (LANLVPFTLTLLSFLLLICSL). At 203 to 229 (CKHLNKMQLHGKGSQDPSTKVHIKVLQ) the chain is on the cytoplasmic side. The chain crosses the membrane as a helical span at residues 230–250 (TVISFLLLCAIYFLSIMISVW). Residues 251-259 (SFGSLENKP) are Extracellular-facing. A helical membrane pass occupies residues 260 to 280 (VFMFCKAIRFSYPSIHPFILI). Residues 281-309 (WGNKKLKQTFLSVLRQVRYWVKGEKPSSP) lie on the Cytoplasmic side of the membrane.

This sequence belongs to the G-protein coupled receptor T2R family.

It is found in the membrane. Functionally, receptor that may play a role in the perception of bitterness and is gustducin-linked. May play a role in sensing the chemical composition of the gastrointestinal content. The activity of this receptor may stimulate alpha gustducin, mediate PLC-beta-2 activation and lead to the gating of TRPM5. The chain is Taste receptor type 2 member 31 (TAS2R31) from Pongo pygmaeus (Bornean orangutan).